The following is a 220-amino-acid chain: Fructose-6-phosphate aldolase 2 (220 aa).

K85 acts as the Schiff-base intermediate with substrate in catalysis.

This sequence belongs to the transaldolase family. Type 3A subfamily. Homodecamer.

It is found in the cytoplasm. The enzyme catalyses beta-D-fructose 6-phosphate = dihydroxyacetone + D-glyceraldehyde 3-phosphate. In terms of biological role, catalyzes the reversible formation of fructose 6-phosphate from dihydroxyacetone and D-glyceraldehyde 3-phosphate via an aldolization reaction. This chain is Fructose-6-phosphate aldolase 2 (fsaB), found in Escherichia coli O6:H1 (strain CFT073 / ATCC 700928 / UPEC).